A 629-amino-acid chain; its full sequence is 5-aminolevulinate synthase, mitochondrial (629 aa).

A mitochondrion-targeting transit peptide spans Met1–Ala69. Residues Arg155, Ser268, and Lys287 each coordinate substrate. Residues Ser320, His348, and Thr388 each coordinate pyridoxal 5'-phosphate. Lys391 is a catalytic residue. The residue at position 391 (Lys391) is an N6-(pyridoxal phosphate)lysine. Pyridoxal 5'-phosphate-binding residues include Thr420 and Thr421. A substrate-binding site is contributed by Thr506.

The protein belongs to the class-II pyridoxal-phosphate-dependent aminotransferase family. As to quaternary structure, homodimer. It depends on pyridoxal 5'-phosphate as a cofactor.

The protein resides in the mitochondrion matrix. The catalysed reaction is succinyl-CoA + glycine + H(+) = 5-aminolevulinate + CO2 + CoA. The protein operates within porphyrin-containing compound metabolism; protoporphyrin-IX biosynthesis; 5-aminolevulinate from glycine: step 1/1. Catalyzes the synthesis of 5-aminolevulinate (ALA) from succinyl-CoA and glycine, the first and rate-limiting step in heme biosynthesis. The chain is 5-aminolevulinate synthase, mitochondrial (alv-1) from Neurospora crassa (strain ATCC 24698 / 74-OR23-1A / CBS 708.71 / DSM 1257 / FGSC 987).